A 117-amino-acid chain; its full sequence is Hainantoxin-XV-4 (117 aa).

The N-terminal stretch at 1–20 is a signal peptide; that stretch reads MKLCAVIIASLLVCVAVASS. The tract at residues 20–55 is disordered; sequence SSDNQKEFAQEKEMTREETQSLGEHEKDDEVTGSEE. A propeptide spanning residues 21–56 is cleaved from the precursor; it reads SDNQKEFAQEKEMTREETQSLGEHEKDDEVTGSEER. The span at 23–55 shows a compositional bias: basic and acidic residues; the sequence is NQKEFAQEKEMTREETQSLGEHEKDDEVTGSEE. Cystine bridges form between C58–C72, C65–C78, C69–C115, and C71–C91.

It belongs to the neurotoxin 03 (Tx2) family. 02 subfamily. HNTX-XV sub-subfamily. In terms of tissue distribution, expressed by the venom gland.

It localises to the secreted. In terms of biological role, putative ion channel inhibitor. The polypeptide is Hainantoxin-XV-4 (Cyriopagopus hainanus (Chinese bird spider)).